The following is a 224-amino-acid chain: Ribosomal RNA small subunit methyltransferase G (224 aa).

S-adenosyl-L-methionine-binding positions include Gly92, Leu97, Val143–Glu144, and Arg156.

The protein belongs to the methyltransferase superfamily. RNA methyltransferase RsmG family.

It localises to the cytoplasm. It catalyses the reaction guanosine(527) in 16S rRNA + S-adenosyl-L-methionine = N(7)-methylguanosine(527) in 16S rRNA + S-adenosyl-L-homocysteine. In terms of biological role, specifically methylates the N7 position of guanine in position 527 of 16S rRNA. The polypeptide is Ribosomal RNA small subunit methyltransferase G (Albidiferax ferrireducens (strain ATCC BAA-621 / DSM 15236 / T118) (Rhodoferax ferrireducens)).